A 299-amino-acid chain; its full sequence is 4-hydroxy-tetrahydrodipicolinate synthase (299 aa).

A pyruvate-binding site is contributed by threonine 44. Tyrosine 133 acts as the Proton donor/acceptor in catalysis. Catalysis depends on lysine 162, which acts as the Schiff-base intermediate with substrate. Isoleucine 204 serves as a coordination point for pyruvate.

This sequence belongs to the DapA family. In terms of assembly, homotetramer; dimer of dimers.

It localises to the cytoplasm. It carries out the reaction L-aspartate 4-semialdehyde + pyruvate = (2S,4S)-4-hydroxy-2,3,4,5-tetrahydrodipicolinate + H2O + H(+). It functions in the pathway amino-acid biosynthesis; L-lysine biosynthesis via DAP pathway; (S)-tetrahydrodipicolinate from L-aspartate: step 3/4. Its function is as follows. Catalyzes the condensation of (S)-aspartate-beta-semialdehyde [(S)-ASA] and pyruvate to 4-hydroxy-tetrahydrodipicolinate (HTPA). The polypeptide is 4-hydroxy-tetrahydrodipicolinate synthase (Thermus thermophilus (strain ATCC BAA-163 / DSM 7039 / HB27)).